Reading from the N-terminus, the 1052-residue chain is ATP-dependent DNA helicase MPH1 (1052 aa).

Residues 89–256 (IVRKGLLQNI…EVVNNLNISK (168 aa)) enclose the Helicase ATP-binding domain. 102–109 (IPTGMGKT) is an ATP binding site. A DEAH box motif is present at residues 204 to 207 (DEAH). The 218-residue stretch at 432 to 649 (ELTQFFYENP…HLVQYRKSDR (218 aa)) folds into the Helicase C-terminal domain. 4 disordered regions span residues 495 to 550 (HGPK…NQKQ), 798 to 832 (IGDT…DLPL), 869 to 898 (SKRQ…QPEV), and 1002 to 1052 (HTVS…DSDF). Residues 503–532 (SDREKRLEEERRMDEEKKQAALQEKLERTS) show a composition bias toward basic and acidic residues. The span at 534–549 (RTGSSEEAQLSGMNQK) shows a compositional bias: polar residues. 2 stretches are compositionally biased toward low complexity: residues 875-898 (QPEV…QPEV) and 1005-1028 (SQSQ…QQAS). Residues 1029-1040 (QKDRSSQDKDLT) are compositionally biased toward basic and acidic residues. Acidic residues predominate over residues 1043-1052 (ELEDLLDSDF).

Belongs to the DEAD box helicase family. DEAH subfamily. FANCM sub-subfamily. In terms of assembly, interacts with the MHF histone-fold complex to form the FANCM-MHF complex.

Its subcellular location is the nucleus. It carries out the reaction ATP + H2O = ADP + phosphate + H(+). Functionally, ATP-dependent DNA helicase involved in DNA damage repair by homologous recombination and in genome maintenance. Capable of unwinding D-loops. Plays a role in limiting crossover recombinants during mitotic DNA double-strand break (DSB) repair. Component of a FANCM-MHF complex which promotes gene conversion at blocked replication forks, probably by reversal of the stalled fork. This chain is ATP-dependent DNA helicase MPH1, found in Candida glabrata (strain ATCC 2001 / BCRC 20586 / JCM 3761 / NBRC 0622 / NRRL Y-65 / CBS 138) (Yeast).